The chain runs to 162 residues: MSRIVSVGISEFKIASAPTILMTYGLGSCVGIALHDPVALTGGLAHTLLPAPVRGMDSMVKSAKFTCWAVDLMVEELIKCGCVAERLVAKLAGGATMFEPQHRTTHSGIGERNVTAAKEALERRGIPLVASDTGDDYGRSLEFNTVTGVITVRALQRPIKRM.

It belongs to the CheD family.

The enzyme catalyses L-glutaminyl-[protein] + H2O = L-glutamyl-[protein] + NH4(+). In terms of biological role, probably deamidates glutamine residues to glutamate on methyl-accepting chemotaxis receptors (MCPs), playing an important role in chemotaxis. The sequence is that of Probable chemoreceptor glutamine deamidase CheD 3 from Geobacter sulfurreducens (strain ATCC 51573 / DSM 12127 / PCA).